A 145-amino-acid chain; its full sequence is Actin-related protein 4A (145 aa).

The segment at 47–66 (IDDAANTTEDAKESDKEKGK) is disordered. Residues 55–64 (EDAKESDKEK) are compositionally biased toward basic and acidic residues.

The protein belongs to the actin family. ARP4 subfamily. In terms of tissue distribution, expressed in roots, leaves and flowers.

This Arabidopsis thaliana (Mouse-ear cress) protein is Actin-related protein 4A (ARP4A).